A 359-amino-acid polypeptide reads, in one-letter code: 4-hydroxyproline 2-epimerase (359 aa).

Cysteine 126 (proton acceptor) is an active-site residue. Substrate is bound by residues 127–128 (GH), histidine 248, and aspartate 274. Residue cysteine 278 is the Proton donor of the active site. 279–280 (GT) contributes to the substrate binding site.

Belongs to the proline racemase family.

The enzyme catalyses trans-4-hydroxy-L-proline = cis-4-hydroxy-D-proline. Catalyzes the epimerization of trans-4-hydroxy-L-proline (t4LHyp) to cis-4-hydroxy-D-proline (c4DHyp). Is likely involved in a degradation pathway that converts t4LHyp to alpha-ketoglutarate. Displays no proline racemase activity. The sequence is that of 4-hydroxyproline 2-epimerase from Planctopirus limnophila (strain ATCC 43296 / DSM 3776 / IFAM 1008 / Mu 290) (Planctomyces limnophilus).